A 579-amino-acid chain; its full sequence is Rop guanine nucleotide exchange factor 6 (579 aa).

The span at 31–61 (ESTTDSSLSSSSSGVGSSSGRSSVAERSVSS) shows a compositional bias: low complexity. Positions 31–89 (ESTTDSSLSSSSSGVGSSSGRSSVAERSVSSPPTKSQILGWPLGQGSWRKSSGKMKKKT) are disordered. The region spanning 98–479 (FKRVGTETSE…DISKDDGDGD (382 aa)) is the PRONE domain.

Guanine-nucleotide exchange factor (GEF) that acts as an activator of Rop (Rho of plants) GTPases by promoting the exchange of GDP for GTP. This Arabidopsis thaliana (Mouse-ear cress) protein is Rop guanine nucleotide exchange factor 6 (ROPGEF6).